The sequence spans 287 residues: Ret finger protein-like 4A (287 aa).

The RING-type; degenerate zinc-finger motif lies at 11 to 53 (CYFCFRCLESPVYLNCGYICCLKCLDSLEKSPEGDGVLCPTCS). One can recognise a B30.2/SPRY domain in the interval 78-278 (EPQLNFILTM…LSICPVTNPG (201 aa)).

In terms of assembly, interacts with PSMB1, UBE2A and CCNB1. Expressed in the ovaries and oocytes (at protein level). Expression restricted to gonads. In testis, present at later stages of spermatogeneis and abundant in elongating spermatids.

The protein localises to the cytoplasm. It is found in the nucleus. The sequence is that of Ret finger protein-like 4A (Rfpl4a) from Mus musculus (Mouse).